A 425-amino-acid chain; its full sequence is Enolase (425 aa).

Gln163 is a binding site for (2R)-2-phosphoglycerate. Glu205 acts as the Proton donor in catalysis. Asp242, Glu285, and Asp312 together coordinate Mg(2+). Positions 337, 366, 367, and 388 each coordinate (2R)-2-phosphoglycerate. Residue Lys337 is the Proton acceptor of the active site.

The protein belongs to the enolase family. The cofactor is Mg(2+).

It localises to the cytoplasm. The protein resides in the secreted. The protein localises to the cell surface. It catalyses the reaction (2R)-2-phosphoglycerate = phosphoenolpyruvate + H2O. It functions in the pathway carbohydrate degradation; glycolysis; pyruvate from D-glyceraldehyde 3-phosphate: step 4/5. Its function is as follows. Catalyzes the reversible conversion of 2-phosphoglycerate (2-PG) into phosphoenolpyruvate (PEP). It is essential for the degradation of carbohydrates via glycolysis. The chain is Enolase from Rhodospirillum rubrum (strain ATCC 11170 / ATH 1.1.1 / DSM 467 / LMG 4362 / NCIMB 8255 / S1).